The chain runs to 250 residues: Methionine aminopeptidase (250 aa).

His-77 provides a ligand contact to substrate. Residues Asp-94, Asp-105, and His-169 each contribute to the a divalent metal cation site. Residue His-176 coordinates substrate. Positions 202 and 235 each coordinate a divalent metal cation.

Belongs to the peptidase M24A family. Methionine aminopeptidase type 1 subfamily. Monomer. The cofactor is Co(2+). Zn(2+) serves as cofactor. Mn(2+) is required as a cofactor. It depends on Fe(2+) as a cofactor.

The enzyme catalyses Release of N-terminal amino acids, preferentially methionine, from peptides and arylamides.. Its function is as follows. Removes the N-terminal methionine from nascent proteins. The N-terminal methionine is often cleaved when the second residue in the primary sequence is small and uncharged (Met-Ala-, Cys, Gly, Pro, Ser, Thr, or Val). Requires deformylation of the N(alpha)-formylated initiator methionine before it can be hydrolyzed. In Mycoplasmoides gallisepticum (strain R(low / passage 15 / clone 2)) (Mycoplasma gallisepticum), this protein is Methionine aminopeptidase.